Consider the following 754-residue polypeptide: MKNSIISYPRIGANRELKFAIEKYFKNQSSKEELLKSAKDLRIRHWQEIQKAGIDFIPSNDFSLYDNVLDAAVLFNIVHTKYKNLNLDALDEYFAQSRGYQGENGDVTALAMKKWFNTNYHYLVPECDNADIIALTGDKIFKEYLEAKELGIESKPVLIGIFTLFKLIAFKDEKTQKLAKEKLLNAYIELFDKLNELKVTWLELDEPYLVYDLSKEDIALFEEFYQELLNHKKDLKILLQSYFGDLRDIYPKLLESKFDALGLDFIEGKQSLALVQQYGFAKDKILFGGLINGKNIYANDYAKSLKLIKELQKYTQNIILNTSCSLLHVPYSTEFESKLDSSYLKLFAFAKEKLQELKDLKEILNSSEENPLFRANQELFKNIPERLDEKVKARLKALKKEDFTRTPSFKERALIQKEFLKLPLLPTTTIGSFPQSADVRSNRLAFKQEKISAQNYTEFNQQKIKECIQIQEEIGLDVLVHGEFERNDMVEYFGENLKGFLFTQNGWVQSYGTRCVKPPVIWGDVSRTKPITLAWSKFAQSLSQKIVKGMLTGPVTILNWSFPREDISLKESTEQIALAIRDEVLDLENAGIKIIQIDEAALREKLPLRKSDWHSEYLDWAIPAFNLVHSGVKAKTQIHTHMCYSEFSDILKEIDAMDADVISFEASRSNLSLLDTLKAIRFKTEVGPGVYDIHSPRVPSVEELSLTIEKILNKLPKEQIWINPDCGLKTRAYEEVITSLKNLVTATQKIREQL.

Residues 15–18 (RELK) and K114 each bind 5-methyltetrahydropteroyltri-L-glutamate. Residues 430 to 432 (IGS) and E483 each bind L-homocysteine. Residues 430–432 (IGS) and E483 contribute to the L-methionine site. 5-methyltetrahydropteroyltri-L-glutamate-binding positions include 514-515 (RC) and W560. D598 is an L-homocysteine binding site. D598 lines the L-methionine pocket. E604 serves as a coordination point for 5-methyltetrahydropteroyltri-L-glutamate. Zn(2+)-binding residues include H641, C643, and E665. H694 acts as the Proton donor in catalysis. Position 726 (C726) interacts with Zn(2+).

This sequence belongs to the vitamin-B12 independent methionine synthase family. Zn(2+) is required as a cofactor.

It carries out the reaction 5-methyltetrahydropteroyltri-L-glutamate + L-homocysteine = tetrahydropteroyltri-L-glutamate + L-methionine. It functions in the pathway amino-acid biosynthesis; L-methionine biosynthesis via de novo pathway; L-methionine from L-homocysteine (MetE route): step 1/1. Its function is as follows. Catalyzes the transfer of a methyl group from 5-methyltetrahydrofolate to homocysteine resulting in methionine formation. This is 5-methyltetrahydropteroyltriglutamate--homocysteine methyltransferase from Campylobacter jejuni subsp. jejuni serotype O:2 (strain ATCC 700819 / NCTC 11168).